The chain runs to 170 residues: Large ribosomal subunit protein uL5 (170 aa).

It belongs to the universal ribosomal protein uL5 family. Part of the 50S ribosomal subunit; contacts the 5S rRNA and probably tRNA. Forms a bridge to the 30S subunit in the 70S ribosome.

In terms of biological role, this is one of the proteins that bind and probably mediate the attachment of the 5S RNA into the large ribosomal subunit, where it forms part of the central protuberance. In the 70S ribosome it contacts protein S13 of the 30S subunit (bridge B1b), connecting the 2 subunits; this bridge is implicated in subunit movement. May contact the P site tRNA; the 5S rRNA and some of its associated proteins might help stabilize positioning of ribosome-bound tRNAs. This Thermoplasma volcanium (strain ATCC 51530 / DSM 4299 / JCM 9571 / NBRC 15438 / GSS1) protein is Large ribosomal subunit protein uL5.